Consider the following 99-residue polypeptide: NADH-quinone oxidoreductase subunit K (99 aa).

A run of 3 helical transmembrane segments spans residues 3–23 (PANY…GVLL), 28–48 (IVMF…FVTF), and 59–79 (MIAF…LAII).

It belongs to the complex I subunit 4L family. As to quaternary structure, NDH-1 is composed of 14 different subunits. Subunits NuoA, H, J, K, L, M, N constitute the membrane sector of the complex.

The protein localises to the cell membrane. It catalyses the reaction a quinone + NADH + 5 H(+)(in) = a quinol + NAD(+) + 4 H(+)(out). Its function is as follows. NDH-1 shuttles electrons from NADH, via FMN and iron-sulfur (Fe-S) centers, to quinones in the respiratory chain. The immediate electron acceptor for the enzyme in this species is believed to be a menaquinone. Couples the redox reaction to proton translocation (for every two electrons transferred, four hydrogen ions are translocated across the cytoplasmic membrane), and thus conserves the redox energy in a proton gradient. The protein is NADH-quinone oxidoreductase subunit K of Mycobacterium bovis (strain ATCC BAA-935 / AF2122/97).